Here is a 226-residue protein sequence, read N- to C-terminus: MPARLDARATRRYFDSAFNSPAVKILPNEYYVTNGEDVMLSTVLGSCVAACIHDPVIGVGGMNHFMLPEGDIHSPASATMRYGAFAMEVLINELLKAGAVRERLEAKVFGGGAVLSAMQLMNIGERNGQFVLNYLKTEGIPVRAQDLGDVHARRINYFPRDGRVMVRKMAPHHQKAEALIAQREAAAAQTVQAETRAAPRVERFARPGGMRVERFDTPSRRDPVGA.

A disordered region spans residues 207-226; the sequence is PGGMRVERFDTPSRRDPVGA.

Belongs to the CheD family.

The catalysed reaction is L-glutaminyl-[protein] + H2O = L-glutamyl-[protein] + NH4(+). Its function is as follows. Probably deamidates glutamine residues to glutamate on methyl-accepting chemotaxis receptors (MCPs), playing an important role in chemotaxis. The polypeptide is Probable chemoreceptor glutamine deamidase CheD (Bordetella bronchiseptica (strain ATCC BAA-588 / NCTC 13252 / RB50) (Alcaligenes bronchisepticus)).